A 229-amino-acid chain; its full sequence is UPF0488 protein C8orf33 homolog (229 aa).

Residue alanine 2 is modified to N-acetylalanine. Arginine 27 bears the Omega-N-methylarginine mark. The interval 55–101 is disordered; sequence SRAHPLGDEGGTASKKQNKKKKTRNRASVANGGEKASEKLAPEEVPL. Positions 70-79 are enriched in basic residues; the sequence is KQNKKKKTRN. Phosphoserine is present on serine 82.

The protein belongs to the UPF0488 family.

This is UPF0488 protein C8orf33 homolog from Pongo abelii (Sumatran orangutan).